A 252-amino-acid chain; its full sequence is Phosphate import ATP-binding protein PstB (252 aa).

An ABC transporter domain is found at 5–247 (LIASDVNIFY…PRDERTEAYV (243 aa)). An ATP-binding site is contributed by 37-44 (GPSGCGKT).

This sequence belongs to the ABC transporter superfamily. Phosphate importer (TC 3.A.1.7) family. In terms of assembly, the complex is composed of two ATP-binding proteins (PstB), two transmembrane proteins (PstC and PstA) and a solute-binding protein (PstS).

The protein localises to the cell membrane. The enzyme catalyses phosphate(out) + ATP + H2O = ADP + 2 phosphate(in) + H(+). Its function is as follows. Part of the ABC transporter complex PstSACB involved in phosphate import. Responsible for energy coupling to the transport system. This is Phosphate import ATP-binding protein PstB from Deinococcus geothermalis (strain DSM 11300 / CIP 105573 / AG-3a).